The following is a 309-amino-acid chain: HPr kinase/phosphorylase (309 aa).

Residues His-138 and Lys-159 contribute to the active site. 153–160 (GKSGIGKS) contacts ATP. Mg(2+) is bound at residue Ser-160. Asp-177 functions as the Proton acceptor; for phosphorylation activity. Proton donor; for dephosphorylation activity in the catalytic mechanism. An important for the catalytic mechanism of both phosphorylation and dephosphorylation region spans residues 201–210 (IEVRGIGILD). Glu-202 serves as a coordination point for Mg(2+). The active site involves Arg-243. The important for the catalytic mechanism of dephosphorylation stretch occupies residues 264–269 (PIKPAR).

This sequence belongs to the HPrK/P family. Homohexamer. Requires Mg(2+) as cofactor.

The catalysed reaction is [HPr protein]-L-serine + ATP = [HPr protein]-O-phospho-L-serine + ADP + H(+). It carries out the reaction [HPr protein]-O-phospho-L-serine + phosphate + H(+) = [HPr protein]-L-serine + diphosphate. Catalyzes the ATP- as well as the pyrophosphate-dependent phosphorylation of a specific serine residue in HPr, a phosphocarrier protein of the phosphoenolpyruvate-dependent sugar phosphotransferase system (PTS). HprK/P also catalyzes the pyrophosphate-producing, inorganic phosphate-dependent dephosphorylation (phosphorolysis) of seryl-phosphorylated HPr (P-Ser-HPr). The two antagonistic activities of HprK/P are regulated by several intracellular metabolites, which change their concentration in response to the absence or presence of rapidly metabolisable carbon sources (glucose, fructose, etc.) in the growth medium. Therefore, by controlling the phosphorylation state of HPr, HPrK/P is a sensor enzyme that plays a major role in the regulation of carbon metabolism and sugar transport: it mediates carbon catabolite repression (CCR), and regulates PTS-catalyzed carbohydrate uptake and inducer exclusion. This chain is HPr kinase/phosphorylase, found in Alkaliphilus metalliredigens (strain QYMF).